We begin with the raw amino-acid sequence, 318 residues long: Protein phosphatase 1 regulatory subunit 3C (318 aa).

Positions 84-87 (RVVF) match the PP1-binding motif motif. Residues 141–263 (PSADYLSFRN…YRIVHVQWKP (123 aa)) are interaction with EPM2A. Residues 149 to 257 (RNHFQKNSVC…NNEGQNYRIV (109 aa)) form the CBM21 domain.

Interacts with PPP1CC catalytic subunit of PP1 and associates with glycogen. Forms complexes with glycogen phosphorylase, glycogen synthase and phosphorylase kinase which is necessary for its regulation of PP1 activity. Also interacts with EPM2A/laforin. In terms of processing, ubiquitinated by NHLRC1/malin in a EPM2A/laforin-dependent manner.

Acts as a glycogen-targeting subunit for PP1 and regulates its activity. Activates glycogen synthase, reduces glycogen phosphorylase activity and limits glycogen breakdown. Dramatically increases basal and insulin-stimulated glycogen synthesis upon overexpression in a variety of cell types. The polypeptide is Protein phosphatase 1 regulatory subunit 3C (Bos taurus (Bovine)).